Here is a 230-residue protein sequence, read N- to C-terminus: Ribonuclease 3 (230 aa).

An RNase III domain is found at 10 to 133 (DPRLLSRIGY…IIGAIYLDSG (124 aa)). E46 is a binding site for Mg(2+). Residue D50 is part of the active site. Mg(2+) contacts are provided by D119 and E122. Residue E122 is part of the active site. In terms of domain architecture, DRBM spans 161 to 230 (DPKSRLQEYL…AAEILKLLEQ (70 aa)).

The protein belongs to the ribonuclease III family. As to quaternary structure, homodimer. Mg(2+) serves as cofactor.

It localises to the cytoplasm. The enzyme catalyses Endonucleolytic cleavage to 5'-phosphomonoester.. Its function is as follows. Digests double-stranded RNA. Involved in the processing of primary rRNA transcript to yield the immediate precursors to the large and small rRNAs (23S and 16S). Processes some mRNAs, and tRNAs when they are encoded in the rRNA operon. Processes pre-crRNA and tracrRNA of type II CRISPR loci if present in the organism. In Acinetobacter pittii (strain PHEA-2), this protein is Ribonuclease 3 (rnc).